A 251-amino-acid chain; its full sequence is DNA repair protein RecO (251 aa).

Belongs to the RecO family.

In terms of biological role, involved in DNA repair and RecF pathway recombination. In Staphylococcus saprophyticus subsp. saprophyticus (strain ATCC 15305 / DSM 20229 / NCIMB 8711 / NCTC 7292 / S-41), this protein is DNA repair protein RecO.